The primary structure comprises 75 residues: Protein SlyX homolog (75 aa).

It belongs to the SlyX family.

This is Protein SlyX homolog from Chromobacterium violaceum (strain ATCC 12472 / DSM 30191 / JCM 1249 / CCUG 213 / NBRC 12614 / NCIMB 9131 / NCTC 9757 / MK).